A 586-amino-acid chain; its full sequence is Phosphomethylpyrimidine synthase (586 aa).

The segment at methionine 1–proline 59 is disordered. The segment covering valine 22–glutamate 39 has biased composition (basic and acidic residues). Residues asparagine 193, methionine 222, tyrosine 251, histidine 287, serine 307–glycine 309, aspartate 348–arginine 351, and glutamate 387 each bind substrate. Histidine 391 is a binding site for Zn(2+). Tyrosine 414 is a binding site for substrate. Residue histidine 455 coordinates Zn(2+). [4Fe-4S] cluster-binding residues include cysteine 535, cysteine 538, and cysteine 543.

This sequence belongs to the ThiC family. [4Fe-4S] cluster serves as cofactor.

The catalysed reaction is 5-amino-1-(5-phospho-beta-D-ribosyl)imidazole + S-adenosyl-L-methionine = 4-amino-2-methyl-5-(phosphooxymethyl)pyrimidine + CO + 5'-deoxyadenosine + formate + L-methionine + 3 H(+). It functions in the pathway cofactor biosynthesis; thiamine diphosphate biosynthesis. In terms of biological role, catalyzes the synthesis of the hydroxymethylpyrimidine phosphate (HMP-P) moiety of thiamine from aminoimidazole ribotide (AIR) in a radical S-adenosyl-L-methionine (SAM)-dependent reaction. This Bacillus cereus (strain ATCC 10987 / NRS 248) protein is Phosphomethylpyrimidine synthase.